The chain runs to 396 residues: Flavohemoprotein (396 aa).

In terms of domain architecture, Globin spans 1-136; it reads MLDAQTIATV…LANVFINREA (136 aa). Position 85 (histidine 85) interacts with heme b. Catalysis depends on charge relay system residues tyrosine 95 and glutamate 135. Positions 147–396 are reductase; that stretch reads GGWEGTRDFR…YECFGPHKVL (250 aa). Residues 150–255 enclose the FAD-binding FR-type domain; it reads EGTRDFRIVA…VAPAGDFFMA (106 aa). FAD-binding positions include tyrosine 188 and 204-207; that span reads RQYS. 268-273 serves as a coordination point for NADP(+); that stretch reads GVGQTP. Residue 389 to 392 coordinates FAD; that stretch reads CFGP.

Belongs to the globin family. Two-domain flavohemoproteins subfamily. The protein in the C-terminal section; belongs to the flavoprotein pyridine nucleotide cytochrome reductase family. It depends on heme b as a cofactor. FAD serves as cofactor.

The catalysed reaction is 2 nitric oxide + NADPH + 2 O2 = 2 nitrate + NADP(+) + H(+). It carries out the reaction 2 nitric oxide + NADH + 2 O2 = 2 nitrate + NAD(+) + H(+). Functionally, is involved in NO detoxification in an aerobic process, termed nitric oxide dioxygenase (NOD) reaction that utilizes O(2) and NAD(P)H to convert NO to nitrate, which protects the bacterium from various noxious nitrogen compounds. Therefore, plays a central role in the inducible response to nitrosative stress. The sequence is that of Flavohemoprotein from Escherichia coli O6:H1 (strain CFT073 / ATCC 700928 / UPEC).